The sequence spans 34 residues: ALWFTMLKKLGTMALHAGKAALGAAANTISQGTQ.

This sequence belongs to the frog skin active peptide (FSAP) family. Dermaseptin subfamily. Expressed by the skin glands.

It is found in the secreted. Potent antimicrobial peptide with activity against bacteria and protozoa. Also has activity against fungi. Probably acts by disturbing membrane functions with its amphipathic structure. The sequence is that of Dermaseptin-S2 from Phyllomedusa sauvagei (Sauvage's leaf frog).